The following is a 268-amino-acid chain: Adenosylcobinamide-GDP ribazoletransferase (268 aa).

A run of 6 helical transmembrane segments spans residues 54 to 74, 80 to 100, 124 to 144, 150 to 170, 202 to 222, and 243 to 263; these read IAGLVIGGILAAVGWGAGVLW, AVVLVVAWGVLTAGMHLDGLS, IGVMGALALAAVLGLKAAFLA, WLTAVVLAPVLGRWADVYGIV, ALALIVGGVGGLIALALVWMV, and GALCEIAEVVALATLTLSAPM.

The protein belongs to the CobS family. Requires Mg(2+) as cofactor.

The protein localises to the cell membrane. The catalysed reaction is alpha-ribazole + adenosylcob(III)inamide-GDP = adenosylcob(III)alamin + GMP + H(+). It catalyses the reaction alpha-ribazole 5'-phosphate + adenosylcob(III)inamide-GDP = adenosylcob(III)alamin 5'-phosphate + GMP + H(+). Its pathway is cofactor biosynthesis; adenosylcobalamin biosynthesis; adenosylcobalamin from cob(II)yrinate a,c-diamide: step 7/7. In terms of biological role, joins adenosylcobinamide-GDP and alpha-ribazole to generate adenosylcobalamin (Ado-cobalamin). Also synthesizes adenosylcobalamin 5'-phosphate from adenosylcobinamide-GDP and alpha-ribazole 5'-phosphate. This chain is Adenosylcobinamide-GDP ribazoletransferase, found in Roseiflexus sp. (strain RS-1).